A 581-amino-acid chain; its full sequence is 2-isopropylmalate synthase (581 aa).

Residues 32-306 enclose the Pyruvate carboxyltransferase domain; the sequence is PQWCAVDLRD…DPQLDFSDIK (275 aa). Residues aspartate 41, histidine 245, histidine 247, and asparagine 281 each contribute to the Mg(2+) site. A regulatory domain region spans residues 455-581; that stretch reads RSAPVEQIAL…KHQQLQNGGV (127 aa).

The protein belongs to the alpha-IPM synthase/homocitrate synthase family. LeuA type 2 subfamily. In terms of assembly, homodimer. It depends on Mg(2+) as a cofactor.

Its subcellular location is the cytoplasm. It catalyses the reaction 3-methyl-2-oxobutanoate + acetyl-CoA + H2O = (2S)-2-isopropylmalate + CoA + H(+). The protein operates within amino-acid biosynthesis; L-leucine biosynthesis; L-leucine from 3-methyl-2-oxobutanoate: step 1/4. Functionally, catalyzes the condensation of the acetyl group of acetyl-CoA with 3-methyl-2-oxobutanoate (2-ketoisovalerate) to form 3-carboxy-3-hydroxy-4-methylpentanoate (2-isopropylmalate). This chain is 2-isopropylmalate synthase, found in Corynebacterium efficiens (strain DSM 44549 / YS-314 / AJ 12310 / JCM 11189 / NBRC 100395).